A 461-amino-acid polypeptide reads, in one-letter code: Fumarate hydratase class II (461 aa).

Residues 97–99 (SGT), arginine 125, 128–131 (HPND), 138–140 (SSN), and threonine 186 each bind substrate. Catalysis depends on histidine 187, which acts as the Proton donor/acceptor. Serine 317 is an active-site residue. Residues serine 318 and 323–325 (KVN) contribute to the substrate site.

This sequence belongs to the class-II fumarase/aspartase family. Fumarase subfamily. As to quaternary structure, homotetramer.

The protein localises to the cytoplasm. The catalysed reaction is (S)-malate = fumarate + H2O. The protein operates within carbohydrate metabolism; tricarboxylic acid cycle; (S)-malate from fumarate: step 1/1. In terms of biological role, involved in the TCA cycle. Catalyzes the stereospecific interconversion of fumarate to L-malate. This chain is Fumarate hydratase class II, found in Ralstonia nicotianae (strain ATCC BAA-1114 / GMI1000) (Ralstonia solanacearum).